Here is a 321-residue protein sequence, read N- to C-terminus: Probable 3-hydroxyisobutyrate dehydrogenase, mitochondrial (321 aa).

NAD(+)-binding positions include 23 to 52 (KTVG…IVFD), 86 to 87 (LP), and T117. Residue K192 is part of the active site. K267 serves as a coordination point for NAD(+).

Belongs to the HIBADH-related family. 3-hydroxyisobutyrate dehydrogenase subfamily.

It is found in the mitochondrion. It catalyses the reaction 3-hydroxy-2-methylpropanoate + NAD(+) = 2-methyl-3-oxopropanoate + NADH + H(+). Its pathway is amino-acid degradation; L-valine degradation. The polypeptide is Probable 3-hydroxyisobutyrate dehydrogenase, mitochondrial (hibA) (Dictyostelium discoideum (Social amoeba)).